The primary structure comprises 627 residues: Pentatricopeptide repeat-containing protein At2g15630, mitochondrial (627 aa).

A mitochondrion-targeting transit peptide spans 1 to 29 (MRRFTVPCILRHRISILSGAGYSPAAARL). PPR repeat units lie at residues 154–188 (STILFDLLVRCCCQLRMVDEAIECFYLMKEKGFYP), 189–223 (KTETCNHILTLLSRLNRIENAWVFYADMYRMEIKS), 224–258 (NVYTFNIMINVLCKEGKLKKAKGFLGIMEVFGIKP), 259–293 (TIVTYNTLVQGFSLRGRIEGARLIISEMKSKGFQP), 294–324 (DMQTYNPILSWMCNEGRASEVLREMKEIGLV), 326–360 (DSVSYNILIRGCSNNGDLEMAFAYRDEMVKQGMVP), 361–395 (TFYTYNTLIHGLFMENKIEAAEILIREIREKGIVL), 396–430 (DSVTYNILINGYCQHGDAKKAFALHDEMMTDGIQP), 431–465 (TQFTYTSLIYVLCRKNKTREADELFEKVVGKGMKP), 466–500 (DLVMMNTLMDGHCAIGNMDRAFSLLKEMDMMSINP), 501–535 (DDVTYNCLMRGLCGEGKFEEARELMGEMKRRGIKP), 536–570 (DHISYNTLISGYSKKGDTKHAFMVRDEMLSLGFNP), and 571–605 (TLLTYNALLKGLSKNQEGELAEELLREMKSEGIVP).

Belongs to the PPR family. P subfamily.

The protein resides in the mitochondrion. The sequence is that of Pentatricopeptide repeat-containing protein At2g15630, mitochondrial from Arabidopsis thaliana (Mouse-ear cress).